Here is a 443-residue protein sequence, read N- to C-terminus: Xaa-Pro dipeptidase (443 aa).

The Mn(2+) site is built by Asp241, Asp252, His333, Glu378, and Glu417.

This sequence belongs to the peptidase M24B family. Bacterial-type prolidase subfamily. The cofactor is Mn(2+).

The catalysed reaction is Xaa-L-Pro dipeptide + H2O = an L-alpha-amino acid + L-proline. Functionally, splits dipeptides with a prolyl residue in the C-terminal position. The protein is Xaa-Pro dipeptidase of Actinobacillus pleuropneumoniae serotype 5b (strain L20).